The sequence spans 500 residues: MGTARWLALGSLFALAGLLEGRLVGEEEAGFGECDKFFYAGTPPAGLAADSHVKICQRAEGAERFATLYSTRDRIPVYSAFRAPRPAPGGAEQRWLVEPQIDDPNSNLEEAINEAEAITSVNSLGSKQALNTDYLDSDYQRGQLYPFSLSSDVQVATFTLTNSAPMTQSFQERWYVNLHSLMDRALTPQCGSGEDLYILTGTVPSDYRVKDKVAVPEFVWLAACCAVPGGGWAMGFVKHTRDSDIIEDVMVKDLQKLLPFNPQLFQNNCGETEQDTEKMKKILEVVNQIQDEERMVQSQKSSSPLSSTRSKRSTLLPPEASEGSSSFLGKLMGFIATPFIKLFQLIYYLVVAILKNIVYFLWCVTKQVINGIESCLYRLGSATISYFMAIGEELVSIPWKVLKVVAKVIRALLRILCCLLKAICRVLSIPVRVLVDVATFPVYTMGAIPIVCKDIALGLGGTVSLLFDTAFGTLGGLFQVVFSVCKRIGYKVTFDNSGEL.

An N-terminal signal peptide occupies residues 1–21 (MGTARWLALGSLFALAGLLEG). Positions 293 to 323 (ERMVQSQKSSSPLSSTRSKRSTLLPPEASEG) are disordered. Low complexity predominate over residues 297 to 317 (QSQKSSSPLSSTRSKRSTLLP). K407 bears the N6-acetyllysine mark.

It belongs to the DNA/RNA non-specific endonuclease family. In terms of assembly, interacts with RNF26; this interaction is important to modulate innate immune signaling through the cGAS-STING pathway.

It localises to the secreted. Functionally, may act as a DNase and a RNase. Plays a role in the modulation of innate immune signaling through the cGAS-STING pathway by interacting with RNF26. This is Endonuclease domain-containing 1 protein (ENDOD1) from Homo sapiens (Human).